Here is a 694-residue protein sequence, read N- to C-terminus: Ferric reductase transmembrane component 5 (694 aa).

An N-terminal signal peptide occupies residues 1-19 (MLFARLVLLLVYLAPGSLA). At 20 to 163 (KPASTKKRTQ…LDNIDKGNVY (144 aa)) the chain is on the extracellular side. N-linked (GlcNAc...) asparagine glycosylation occurs at asparagine 117. A helical membrane pass occupies residues 164–184 (GVTICLYWIGVLFIAAVYHFL). At 185–222 (NFSRLKQTVFKNKVSAFLRGHYVLPALVHNHAMSVGRW) the chain is on the cytoplasmic side. Residues 223 to 243 (FFIGLVPTRLETLVLFGYVLL) traverse the membrane as a helical segment. Residues 244 to 267 (HGFLLSSYNFDHNELLSDRRSQVL) are Extracellular-facing. Residues 268–288 (IFLSDRAGILAFAHFPLIVLF) traverse the membrane as a helical segment. The 135-residue stretch at 274 to 408 (AGILAFAHFP…GWGEWIMACA (135 aa)) folds into the Ferric oxidoreductase domain. The Cytoplasmic segment spans residues 289 to 311 (GGKNSTMTWLTGIRYTAFITYHK). Histidine 310 and histidine 324 together coordinate heme. Residues 312–334 (WLGRFMLVDCTIHAIGYTYHAYI) traverse the membrane as a helical segment. The Extracellular portion of the chain corresponds to 335-347 (ENYWKYVKYSDLW). The helical transmembrane segment at 348-368 (TSGRHAMIIVGILVFFSFFFF) threads the bilayer. Residues 369-371 (RRH) are Cytoplasmic-facing. The helical transmembrane segment at 372–392 (YYELFVITHIILAIGFFHACW) threads the bilayer. Residues histidine 380 and histidine 394 each contribute to the heme site. The Extracellular segment spans residues 393-403 (KHCYKLGWGEW). The helical transmembrane segment at 404-424 (IMACALFWIADRILRLIKIAI) threads the bilayer. An FAD-binding FR-type domain is found at 409-528 (LFWIADRILR…EGPYGQSTRT (120 aa)). Over 425 to 694 (FGMPWAKLKL…IEYVEEFQNW (270 aa)) the chain is Cytoplasmic. 473-479 (HPFTVMD) is an FAD binding site. NADP(+)-binding positions include 520-523 (GPYG) and 660-661 (CG).

The protein belongs to the ferric reductase (FRE) family. The cofactor is FAD.

It is found in the cell membrane. It carries out the reaction 2 a Fe(II)-siderophore + NADP(+) + H(+) = 2 a Fe(III)-siderophore + NADPH. Its function is as follows. Metalloreductase responsible for reducing extracellular iron and copper prior to import. Catalyzes the reductive uptake of Fe(3+)-salts and Fe(3+) bound to catecholate or hydroxamate siderophores. Fe(3+) is reduced to Fe(2+), which then dissociates from the siderophore and can be imported by the high-affinity Fe(2+) transport complex in the plasma membrane. The protein is Ferric reductase transmembrane component 5 (FRE5) of Saccharomyces cerevisiae (strain ATCC 204508 / S288c) (Baker's yeast).